The sequence spans 220 residues: SAGA-associated factor 11 homolog (220 aa).

The disordered stretch occupies residues 1-38 (MSTGTANSAVSSKSTNSTTSTSKVPVNEKSNNSQNANT). The SGF11-type zinc finger occupies 126–147 (CTCPNCDRPVSAARFAPHLEKC). Composition is skewed to low complexity over residues 160-177 (RRLA…SSSS) and 204-220 (SQNS…GKTF). A disordered region spans residues 160 to 220 (RRLATKESNS…GSKKNNGKTF (61 aa)).

The protein belongs to the SGF11 family. In terms of assembly, component of some SAGA transcription coactivator-HAT complexes. Within the SAGA complex, participates in a subcomplex of SAGA called the DUB module (deubiquitination module).

It is found in the nucleus. Component of the transcription regulatory histone acetylation (HAT) complex SAGA, a multiprotein complex that activates transcription by remodeling chromatin and mediating histone acetylation and deubiquitination. Within the SAGA complex, participates in a subcomplex that specifically deubiquitinates histone H2B. The SAGA complex is recruited to specific gene promoters by activators, where it is required for transcription. This Musca domestica (House fly) protein is SAGA-associated factor 11 homolog.